Reading from the N-terminus, the 290-residue chain is Fructokinase (290 aa).

Thr130 serves as a coordination point for ATP. Zn(2+) is bound by residues His153, Cys169, His172, and Cys175. Residues Pro183 and 231–235 contribute to the ATP site; that span reads GVMEK.

The protein belongs to the ROK (NagC/XylR) family. Homodimer. Mg(2+) serves as cofactor.

The enzyme catalyses D-fructose + ATP = D-fructose 6-phosphate + ADP + H(+). With respect to regulation, inactivated by EDTA. Inhibition by zinc ions (Potential). The protein is Fructokinase (scrK) of Lactococcus lactis subsp. cremoris (Streptococcus cremoris).